Consider the following 164-residue polypeptide: HTH-type transcriptional regulator IscR (164 aa).

Positions 2-131 (RLTSKGRYAV…NNITLGELVN (130 aa)) constitute an HTH rrf2-type domain. Positions 28–51 (LADISERQGISLSYLEQLFSRLRK) form a DNA-binding region, H-T-H motif. [2Fe-2S] cluster is bound by residues cysteine 92, cysteine 98, and cysteine 104.

Requires [2Fe-2S] cluster as cofactor.

Functionally, regulates the transcription of several operons and genes involved in the biogenesis of Fe-S clusters and Fe-S-containing proteins. In Salmonella agona (strain SL483), this protein is HTH-type transcriptional regulator IscR.